A 170-amino-acid polypeptide reads, in one-letter code: uncharacterized protein (170 aa).

Residues 1–26 (MLKKKWMVGLLAGCLAAGGFSYNAFA) form the signal peptide.

This is an uncharacterized protein from Bacillus subtilis (strain 168).